The sequence spans 421 residues: 3-oxoacyl-[acyl-carrier-protein] synthase 2 (421 aa).

The region spanning 1–417 (MRRVVITGTG…GTNASLILRR (417 aa)) is the Ketosynthase family 3 (KS3) domain. Catalysis depends on for beta-ketoacyl synthase activity residues C170, H311, and H347.

It belongs to the thiolase-like superfamily. Beta-ketoacyl-ACP synthases family. As to quaternary structure, homodimer.

The catalysed reaction is a fatty acyl-[ACP] + malonyl-[ACP] + H(+) = a 3-oxoacyl-[ACP] + holo-[ACP] + CO2. It catalyses the reaction (9Z)-hexadecenoyl-[ACP] + malonyl-[ACP] + H(+) = 3-oxo-(11Z)-octadecenoyl-[ACP] + holo-[ACP] + CO2. The protein operates within lipid metabolism; fatty acid biosynthesis. Involved in the type II fatty acid elongation cycle. Catalyzes the elongation of a wide range of acyl-ACP by the addition of two carbons from malonyl-ACP to an acyl acceptor. Can efficiently catalyze the conversion of palmitoleoyl-ACP (cis-hexadec-9-enoyl-ACP) to cis-vaccenoyl-ACP (cis-octadec-11-enoyl-ACP), an essential step in the thermal regulation of fatty acid composition. The protein is 3-oxoacyl-[acyl-carrier-protein] synthase 2 (fabF) of Rhizobium meliloti (strain 1021) (Ensifer meliloti).